A 316-amino-acid chain; its full sequence is Ribosomal protein L11 methyltransferase (316 aa).

Residues threonine 157, glycine 178, aspartate 200, and asparagine 243 each coordinate S-adenosyl-L-methionine.

Belongs to the methyltransferase superfamily. PrmA family.

Its subcellular location is the cytoplasm. It catalyses the reaction L-lysyl-[protein] + 3 S-adenosyl-L-methionine = N(6),N(6),N(6)-trimethyl-L-lysyl-[protein] + 3 S-adenosyl-L-homocysteine + 3 H(+). Methylates ribosomal protein L11. The polypeptide is Ribosomal protein L11 methyltransferase (Streptococcus pneumoniae (strain ATCC 700669 / Spain 23F-1)).